Consider the following 559-residue polypeptide: Sporulation protein kinase mde3 (559 aa).

The Protein kinase domain occupies 21–323 (YLVKQKLGDG…TAKYCKEVFF (303 aa)). ATP is bound by residues 27-35 (LGDGSFGTV) and K53. Residue D150 is the Proton acceptor of the active site.

The protein belongs to the protein kinase superfamily. Ser/Thr protein kinase family.

It carries out the reaction L-seryl-[protein] + ATP = O-phospho-L-seryl-[protein] + ADP + H(+). The catalysed reaction is L-threonyl-[protein] + ATP = O-phospho-L-threonyl-[protein] + ADP + H(+). Functionally, protein kinase which is essential for spore formation. The protein is Sporulation protein kinase mde3 (mde3) of Schizosaccharomyces pombe (strain 972 / ATCC 24843) (Fission yeast).